Here is a 418-residue protein sequence, read N- to C-terminus: Gamma-glutamyl phosphate reductase (418 aa).

Residues M1–S18 show a composition bias toward basic and acidic residues. The interval M1–S22 is disordered.

This sequence belongs to the gamma-glutamyl phosphate reductase family.

It is found in the cytoplasm. The catalysed reaction is L-glutamate 5-semialdehyde + phosphate + NADP(+) = L-glutamyl 5-phosphate + NADPH + H(+). It participates in amino-acid biosynthesis; L-proline biosynthesis; L-glutamate 5-semialdehyde from L-glutamate: step 2/2. In terms of biological role, catalyzes the NADPH-dependent reduction of L-glutamate 5-phosphate into L-glutamate 5-semialdehyde and phosphate. The product spontaneously undergoes cyclization to form 1-pyrroline-5-carboxylate. This is Gamma-glutamyl phosphate reductase from Syntrophus aciditrophicus (strain SB).